The primary structure comprises 897 residues: MSLDFKKTLNMPSTKFDMKANLVEKEPLFRKKWLEDDIYQKVLKNNANNERFVVHDGPPYANGDIHVGHALNKILKDIIVRYKSLQGYYSPFVPGWDTHGLPIEHKMLTESKLDRDQITVELLRKKSRNYALKQIEHQKKQFQKLQLFSDFSKIYITLDKSYEAKQLKVFKKLALDGLVYKGLKPIYWSPSSQSALAEAEVEYETVTTNSIYVSFDVTKSTFNKVPVGSKLVVWTTTPWTLIANAAVAISFDITYLTVKYQDSLYVVAKNLFYNDLLEKFQWENYEVVDEFLGKEMPRNSIWYKAPLLDFDAPVIATNYVLEDSGTGLVHSAPLFGEDDFSLTFDNDLKLIMHISDTGHIENSQTKYDSLFYEEANKEIIKDLAEKVVHVYTYSHSYPHDWRTKKPIIYRATPQWFVSIDKVRSKIVSELQNKVKTFPEWSKNRMISMIENRGDWTISRQRTWGVPIIIFYDENEKPVINEEIFDHVIDLVANHGTDIWFSSTVDELLPEKYRNRNWTKENDIMDVWFDSGVSSIAVDIDGGKTTLPFDVYLEGNDQFRGWFNSSVINAVAYAGVSPYINLVSHGFALDGQGKKMSKSRNNVVDPLDVIKKYGADILRLWVANSEYSSDVHISESILVQNSEIYRKIRNTVKFLLGNLNNFKYDKDLKLTSIHHYINEELKSVKKEVLENYDKFRFINVIKVLNRYVIDLSSFYFSVTKDILYIRKENDEERQMVLKNFYEILDFLMLALAPIIPTTADEMYSYFNKENKKESLFLERLEKAGDVSFDEKVLEQFKEFFELRDQVNILIENQIQNKVIKRSNELELVLPETASEFLKSLDLKTLLMVSKISYGKTLQVVKFESEKCKRCWNHFASLNKEYEICDLCFSVLKDTLANA.

The 'HIGH' region signature appears at 59-69; the sequence is PYANGDIHVGH. Position 553 (glutamate 553) interacts with L-isoleucyl-5'-AMP. Residues 594–598 carry the 'KMSKS' region motif; that stretch reads KMSKS. An ATP-binding site is contributed by lysine 597. Zn(2+)-binding residues include cysteine 866, cysteine 869, cysteine 883, and cysteine 886.

The protein belongs to the class-I aminoacyl-tRNA synthetase family. IleS type 1 subfamily. In terms of assembly, monomer. The cofactor is Zn(2+).

It is found in the cytoplasm. It catalyses the reaction tRNA(Ile) + L-isoleucine + ATP = L-isoleucyl-tRNA(Ile) + AMP + diphosphate. Functionally, catalyzes the attachment of isoleucine to tRNA(Ile). As IleRS can inadvertently accommodate and process structurally similar amino acids such as valine, to avoid such errors it has two additional distinct tRNA(Ile)-dependent editing activities. One activity is designated as 'pretransfer' editing and involves the hydrolysis of activated Val-AMP. The other activity is designated 'posttransfer' editing and involves deacylation of mischarged Val-tRNA(Ile). The sequence is that of Isoleucine--tRNA ligase from Mycoplasmopsis synoviae (strain 53) (Mycoplasma synoviae).